The primary structure comprises 246 residues: 3-deoxy-manno-octulosonate cytidylyltransferase (246 aa).

The protein belongs to the KdsB family.

It localises to the cytoplasm. It catalyses the reaction 3-deoxy-alpha-D-manno-oct-2-ulosonate + CTP = CMP-3-deoxy-beta-D-manno-octulosonate + diphosphate. It functions in the pathway nucleotide-sugar biosynthesis; CMP-3-deoxy-D-manno-octulosonate biosynthesis; CMP-3-deoxy-D-manno-octulosonate from 3-deoxy-D-manno-octulosonate and CTP: step 1/1. Its pathway is bacterial outer membrane biogenesis; lipopolysaccharide biosynthesis. Its function is as follows. Activates KDO (a required 8-carbon sugar) for incorporation into bacterial lipopolysaccharide in Gram-negative bacteria. In Paramagnetospirillum magneticum (strain ATCC 700264 / AMB-1) (Magnetospirillum magneticum), this protein is 3-deoxy-manno-octulosonate cytidylyltransferase.